The chain runs to 479 residues: Protein nucleotidyltransferase YdiU (479 aa).

ATP is bound by residues Gly83, Gly85, Arg86, Lys106, Asp118, Gly119, Arg169, and Arg176. Asp245 acts as the Proton acceptor in catalysis. The Mg(2+) site is built by Asn246 and Asp255. Asp255 contributes to the ATP binding site.

It belongs to the SELO family. Mg(2+) is required as a cofactor. It depends on Mn(2+) as a cofactor.

The enzyme catalyses L-seryl-[protein] + ATP = 3-O-(5'-adenylyl)-L-seryl-[protein] + diphosphate. The catalysed reaction is L-threonyl-[protein] + ATP = 3-O-(5'-adenylyl)-L-threonyl-[protein] + diphosphate. It carries out the reaction L-tyrosyl-[protein] + ATP = O-(5'-adenylyl)-L-tyrosyl-[protein] + diphosphate. It catalyses the reaction L-histidyl-[protein] + UTP = N(tele)-(5'-uridylyl)-L-histidyl-[protein] + diphosphate. The enzyme catalyses L-seryl-[protein] + UTP = O-(5'-uridylyl)-L-seryl-[protein] + diphosphate. The catalysed reaction is L-tyrosyl-[protein] + UTP = O-(5'-uridylyl)-L-tyrosyl-[protein] + diphosphate. Functionally, nucleotidyltransferase involved in the post-translational modification of proteins. It can catalyze the addition of adenosine monophosphate (AMP) or uridine monophosphate (UMP) to a protein, resulting in modifications known as AMPylation and UMPylation. In Erwinia tasmaniensis (strain DSM 17950 / CFBP 7177 / CIP 109463 / NCPPB 4357 / Et1/99), this protein is Protein nucleotidyltransferase YdiU.